Here is a 64-residue protein sequence, read N- to C-terminus: Cytotoxin homolog S4C8 (64 aa).

Intrachain disulfides connect cysteine 3–cysteine 22, cysteine 15–cysteine 40, cysteine 44–cysteine 56, and cysteine 57–cysteine 62.

It belongs to the three-finger toxin family. Short-chain subfamily. Orphan group XIII sub-subfamily. Expressed by the venom gland.

Its subcellular location is the secreted. The chain is Cytotoxin homolog S4C8 from Aspidelaps scutatus (Shield-nose snake).